The chain runs to 697 residues: DNA ligase (697 aa).

NAD(+) is bound by residues Asp-44 to Asp-48, Ser-93 to Leu-94, and Glu-123. Lys-125 (N6-AMP-lysine intermediate) is an active-site residue. The NAD(+) site is built by Arg-146, Glu-186, Lys-302, and Lys-326. Zn(2+) is bound by residues Cys-420, Cys-423, Cys-439, and Cys-445. Positions Ser-609–Val-697 constitute a BRCT domain.

It belongs to the NAD-dependent DNA ligase family. LigA subfamily. Mg(2+) serves as cofactor. Requires Mn(2+) as cofactor.

It catalyses the reaction NAD(+) + (deoxyribonucleotide)n-3'-hydroxyl + 5'-phospho-(deoxyribonucleotide)m = (deoxyribonucleotide)n+m + AMP + beta-nicotinamide D-nucleotide.. In terms of biological role, DNA ligase that catalyzes the formation of phosphodiester linkages between 5'-phosphoryl and 3'-hydroxyl groups in double-stranded DNA using NAD as a coenzyme and as the energy source for the reaction. It is essential for DNA replication and repair of damaged DNA. The sequence is that of DNA ligase from Rhodococcus opacus (strain B4).